Consider the following 131-residue polypeptide: Antitoxin MqsA (131 aa).

Residues Cys3, Cys6, Cys37, and Cys40 each contribute to the Zn(2+) site. Positions 74 to 127 (IVKVRKKLSLTQKEASEIFGGGVNAFSRYEKGNAQPHPSTIKLLRVLDKHPELL) constitute an HTH cro/C1-type domain. Residues 85–104 (QKEASEIFGGGVNAFSRYEK) constitute a DNA-binding region (H-T-H motif).

Homodimer. Crystallizes as a heterotetramer with MqsA, MqsR-MqsA(2)-MqsR. Purifies as a probable heterohexamer of 2 MqsR dimers and 1 MqsA dimer. Binds promoter DNA as a dimer. When the 2 dissociate the MsqR mRNA interferase becomes active. Zn(2+) serves as cofactor. Post-translationally, degraded in the presence of oxidative stress, maybe by the Lon and/or ClpX proteases.

In terms of biological role, antitoxin component of a type II toxin-antitoxin (TA) system. Labile antitoxin that binds to the MqsR mRNA interferase toxin and neutralizes its endoribonuclease activity. Overexpression prevents MqsR-mediated cessation of cell growth and inhibition of cell proliferation. Initially reported to act as a cotranscription factor with MqsA. Following further experiments, the MqsR-MqsA complex does not bind DNA and all reported data are actually due to a small fraction of free MqsA alone binding DNA. Addition of MqsR to a preformed MqsA-promoter DNA complex causes dissociation of the MqsA-DNA complex, probably causing derepression of MqsA-repressed transcripts. MqsA binds to 2 palindromes in the promoter region of the mqsRA operon activating its transcription. Binds to other promoters, inducing mcbR and spy and repressing cspD among others. Binds to and represses the rpoS promoter, the master stress regulator, resulting in decreased cyclic-di-GMP, reduced stress resistance, increased cell motility and decreased biofilm formation; in these experiments 5 TA systems are missing (lacks MazEF, RelEB, ChpB, YoeB-YefM, YafQ-DinJ). An earlier study showed overexpression alone increases biofilm formation, perhaps by repressing cspD; in these experiments the 5 TA systems are present. Represses the csgD promoter. In the presence of stress, when this protein is degraded, the promoters it represses are derepressed, leading to biofilm formation. This TA system mediates cell growth during bile acid deoxycholate stress by degrading mRNA for probable deoxycholate-binding protein YgiS; bile acid detergents such as deoxycholate are important for host defense against bacterial growth in the gall bladder and duodenum. The sequence is that of Antitoxin MqsA from Escherichia coli (strain K12).